The following is a 511-amino-acid chain: Chromosomal replication initiator protein DnaA (511 aa).

The segment at 1-90 is domain I, interacts with DnaA modulators; that stretch reads MSVELWQQCV…KRSSAPRAAP (90 aa). Residues 91–174 form a domain II region; it reads NAPLAAAASQ…QVEGALKHTS (84 aa). A disordered region spans residues 133-162; it reads VAAHDEPSRDSFDPMAGASSQQAPARAEQR. A compositionally biased stretch (basic and acidic residues) spans 135 to 144; that stretch reads AHDEPSRDSF. The domain III, AAA+ region stretch occupies residues 175–391; it reads YLNRTFTFEN…GALKRVIAHS (217 aa). The ATP site is built by G219, G221, K222, and T223. Positions 392 to 511 are domain IV, binds dsDNA; it reads HFMGRDITIE…YKNLLRTLTT (120 aa).

It belongs to the DnaA family. In terms of assembly, oligomerizes as a right-handed, spiral filament on DNA at oriC.

The protein resides in the cytoplasm. Its function is as follows. Plays an essential role in the initiation and regulation of chromosomal replication. ATP-DnaA binds to the origin of replication (oriC) to initiate formation of the DNA replication initiation complex once per cell cycle. Binds the DnaA box (a 9 base pair repeat at the origin) and separates the double-stranded (ds)DNA. Forms a right-handed helical filament on oriC DNA; dsDNA binds to the exterior of the filament while single-stranded (ss)DNA is stabiized in the filament's interior. The ATP-DnaA-oriC complex binds and stabilizes one strand of the AT-rich DNA unwinding element (DUE), permitting loading of DNA polymerase. After initiation quickly degrades to an ADP-DnaA complex that is not apt for DNA replication. Binds acidic phospholipids. The polypeptide is Chromosomal replication initiator protein DnaA (Pseudomonas savastanoi pv. phaseolicola (strain 1448A / Race 6) (Pseudomonas syringae pv. phaseolicola (strain 1448A / Race 6))).